The sequence spans 123 residues: Small ribosomal subunit protein bS16 (123 aa).

The disordered stretch occupies residues 87–123 (VKNNPVKAKPGKRAQERAAEKAQKVADAAAAAADAAE). A compositionally biased stretch (basic and acidic residues) spans 99 to 110 (RAQERAAEKAQK). Residues 111-123 (VADAAAAAADAAE) are compositionally biased toward low complexity.

This sequence belongs to the bacterial ribosomal protein bS16 family.

The sequence is that of Small ribosomal subunit protein bS16 from Rhizobium johnstonii (strain DSM 114642 / LMG 32736 / 3841) (Rhizobium leguminosarum bv. viciae).